Here is a 243-residue protein sequence, read N- to C-terminus: Urease accessory protein UreF (243 aa).

It belongs to the UreF family. In terms of assembly, ureD, UreF and UreG form a complex that acts as a GTP-hydrolysis-dependent molecular chaperone, activating the urease apoprotein by helping to assemble the nickel containing metallocenter of UreC. The UreE protein probably delivers the nickel.

It is found in the cytoplasm. Its function is as follows. Required for maturation of urease via the functional incorporation of the urease nickel metallocenter. This is Urease accessory protein UreF from Rhodopseudomonas palustris (strain BisB5).